The chain runs to 101 residues: Small ribosomal subunit protein eS24 (101 aa).

This sequence belongs to the eukaryotic ribosomal protein eS24 family.

The sequence is that of Small ribosomal subunit protein eS24 from Methanosarcina mazei (strain ATCC BAA-159 / DSM 3647 / Goe1 / Go1 / JCM 11833 / OCM 88) (Methanosarcina frisia).